The following is a 310-amino-acid chain: tRNA-5-methyluridine(54) 2-sulfurtransferase (310 aa).

The Zn(2+) site is built by Cys-3, Cys-6, Cys-22, and His-25. Residues Ala-53 and Ile-79 each contribute to the ATP site. Cys-128 and Cys-131 together coordinate [4Fe-4S] cluster. Cys-128 and Cys-220 are oxidised to a cystine. ATP is bound by residues Lys-135 and Gly-154. Residue Cys-220 coordinates [4Fe-4S] cluster. Residues Cys-272, Cys-275, Cys-284, and Cys-287 each contribute to the Zn(2+) site.

Belongs to the TtcA family. TtuA subfamily. In terms of assembly, homodimer. The cofactor is [4Fe-4S] cluster. Mg(2+) serves as cofactor.

The enzyme catalyses 5-methyluridine(54) in tRNA + hydrogen sulfide + ATP = 5-methyl-2-thiouridine(54) in tRNA + AMP + diphosphate. It participates in tRNA modification. Catalyzes the ATP-dependent 2-thiolation of 5-methyluridine residue at position 54 in the T loop of tRNAs, leading to 5-methyl-2-thiouridine (m(5)s(2)U or s(2)T). This modification allows thermal stabilization of tRNAs in thermophilic microorganisms, and is required for cell growth at high temperatures. Can use free sulfide as sulfur source in vitro, which may be also the sulfur source in vivo. This chain is tRNA-5-methyluridine(54) 2-sulfurtransferase, found in Pyrococcus horikoshii (strain ATCC 700860 / DSM 12428 / JCM 9974 / NBRC 100139 / OT-3).